A 755-amino-acid polypeptide reads, in one-letter code: Proprotein convertase subtilisin/kexin type 4 (755 aa).

The N-terminal stretch at 1 to 25 is a signal peptide; the sequence is MRPAPIALWLRLVLALALVRPRAVG. A propeptide spanning residues 26-113 is cleaved from the precursor; sequence WAPVRAPIYV…QQTLQRRVKR (88 aa). Positions 126–440 constitute a Peptidase S8 domain; the sequence is QWYMNSEAQP…YGLLDAGLLV (315 aa). Catalysis depends on charge relay system residues Asp158, His199, and Ser373. A P/Homo B domain is found at 449–581; that stretch reads TQPQRKCAVR…TLLLYGTAED (133 aa). Residues Asn475 and Asn629 are each glycosylated (N-linked (GlcNAc...) asparagine). The chain crosses the membrane as a helical span at residues 709 to 729; it reads AMVLSLLAVTLGGPVLCGMSM.

The protein belongs to the peptidase S8 family. Furin subfamily. The proPCSK4 form interacts with HSPA5; the interaction takes place at the endoplasmic reticulum. In terms of processing, N-glycosylated. Synthesized in the endoplasmic reticulum as a zymogen, is matured by autocatalytic cleavage between the prodomain and the catalytic domain. In terms of tissue distribution, placenta.

It localises to the membrane. The protein resides in the cytoplasmic vesicle. The protein localises to the secretory vesicle. It is found in the acrosome membrane. Functionally, proprotein convertase involved in the processing of hormone and other protein precursors at sites comprised of pairs of basic amino acid residues. In males, important for ADAM2 processing as well as other acrosomal proteins with roles in fertilization and critical for normal fertilization events such as sperm capacitation, acrosome reaction and binding of sperm to zona pellucida. Also plays a role in female fertility, involved in the regulation of trophoblast migration and placental development, may be through the proteolytical processing and activation of proteins such as IGF2. May also participate in folliculogenesis in the ovaries. This is Proprotein convertase subtilisin/kexin type 4 from Homo sapiens (Human).